Consider the following 301-residue polypeptide: MSRQAAPRWVVGEGRGTLGGAATMLRSLLLHSLRLCSQTASCLVLFPRFLGTAFMLWLLDFLCIRKHLLGRRRRGQPEIEVELNSDGEEVPPDDPPVCVSDDNRLCTLASLRAVWHGQKLDFFKQAHEGGPAPNSEVVLPDGFQNQHILDYARGNRPLVLNFGSCTUPPFMARMSAFQRLVTKYQRDVDFLIIYIEEAHPSDGWVTTDSPYSIPQHRSLEDRVSAARVLQQGAPECALVLDTMTNSSSSAYGAYFERLYIIQSGTIMYQGGRGPDGYQVSEVRTWLERYDEQLHGPQPRRV.

Residues 1–41 (MSRQAAPRWVVGEGRGTLGGAATMLRSLLLHSLRLCSQTAS) lie on the Cytoplasmic side of the membrane. Residues 42-64 (CLVLFPRFLGTAFMLWLLDFLCI) traverse the membrane as a helical; Signal-anchor for type II membrane protein segment. Residues 65–301 (RKHLLGRRRR…QLHGPQPRRV (237 aa)) are Extracellular-facing. The active site involves Sec167. Sec167 is a non-standard amino acid (selenocysteine).

It belongs to the iodothyronine deiodinase family. In terms of assembly, monomer. Homodimer. May undergo minor heretodimerization with DIO1 and DIO2. As to expression, highly expressed in mammary gland. Detected at lower levels in kidney, and at very low levels in the other tissues.

Its subcellular location is the cell membrane. The protein localises to the endosome membrane. The enzyme catalyses 3,3',5'-triiodo-L-thyronine + iodide + A + H(+) = L-thyroxine + AH2. The catalysed reaction is 3,3'-diiodo-L-thyronine + iodide + A + H(+) = 3,3',5-triiodo-L-thyronine + AH2. It carries out the reaction 3-iodo-L-thyronine + iodide + A + H(+) = 3,5-diiodo-L-thyronine + AH2. It catalyses the reaction L-thyronine + iodide + A + H(+) = 3-iodo-L-thyronine + AH2. The enzyme catalyses 3',5'-diiodo-L-thyronine + iodide + A + H(+) = 3,3',5'-triiodo-L-thyronine + AH2. The catalysed reaction is 3'-iodo-L-thyronine + iodide + A + H(+) = 3,3'-diiodo-L-thyronine + AH2. It carries out the reaction 3,3',5'-triiodothyronamine + iodide + A + H(+) = 3,3',5,5'-tetraiodothyronamine + AH2. It catalyses the reaction 3',5'-diiodothyronamine + iodide + A + H(+) = 3,3',5'-triiodothyronamine + AH2. The enzyme catalyses 3,3'-diiodothyronamine + iodide + A + H(+) = 3,3',5-triiodothyronamine + AH2. The catalysed reaction is 3-iodothyronamine + iodide + A + H(+) = 3,5-diiodothyronamine + AH2. It carries out the reaction 3'-iodothyronamine + iodide + A + H(+) = 3,3'-diiodothyronamine + AH2. It catalyses the reaction thyronamine + iodide + A + H(+) = 3-iodothyronamine + AH2. Functionally, plays a crucial role in the metabolism of thyroid hormones (TH) and has specific roles in TH activation and inactivation by deiodination. Catalyzes the deiodination of L-thyroxine (T4) to 3,3',5'-triiodothyronine (rT3), 3,5,3'-triiodothyronine (T3) to 3,3'-diiodothyronine (3,3'-T2), 3,5-diiodothyronine (3,5-T2) to 3-monoiodothyronine (3-T1), rT3 to 3',5'-diiodothyronine (3',5'-T2) and 3,3'-T2 to 3'-monoiodothyronine (3'-T1) via inner-ring deiodination (IRD). Catalyzes the deiodination of 3-T1 to L-thyronine (T0) via outer-ring deiodination (ORD). Catalyzes the tyrosyl ring deiodinations of 3,3',5,5'-tetraiodothyronamine, 3,3',5'-triiodothyronamine, 3,5,3'-triiodothyronamine, 3,5-diiodothyronamine, 3,3'-diiodothyronamine and 3-iodothyronamine. The sequence is that of Thyroxine 5-deiodinase (DIO3) from Bos taurus (Bovine).